The chain runs to 229 residues: Allatostatin-A (229 aa).

A signal peptide spans 1–18 (MLSTSLPVCFLVIGAALC). Positions 19 to 48 (APERMQNDPDPHDSTAQGSDNHSDHIAPLA) are excised as a propeptide. Positions 23-46 (MQNDPDPHDSTAQGSDNHSDHIAP) are disordered. Leu-58 is modified (leucine amide). Positions 62–80 (AYSYVSEYKRLPVYNFGLG) are excised as a propeptide. Leu-90 carries the post-translational modification Leucine amide. A propeptide spanning residues 94 to 130 (SVDEDQTNDDQQQIMNNDLDQAALAEFFDQYDDAGYE) is cleaved from the precursor. Leu-140 carries the post-translational modification Leucine amide. A propeptide spanning residues 144–152 (FADDDTSEE) is cleaved from the precursor. Leu-162, Leu-173, Leu-184, Leu-196, and Leu-210 each carry leucine amide. Residues 214–229 (SADDASTEDSDNYFDV) constitute a propeptide that is removed on maturation.

It belongs to the allatostatin family. Allatostatin-A-1: Expressed in antennal lobe (AL), corpora cardiaca (CC), corpora allata (CA) and gnathal ganglion (GNG) (at protein level). Expression in AL and GNG detected in most animals, in CC and CA in some animals (at protein level). Allatostatin-A-3: Expressed in antennal lobe (AL), corpora cardiaca (CC), corpora allata (CA) and gnathal ganglion (GNG) (at protein level). Expression in AL detected in all animals, in GNG, CC and CA in most animals (at protein level). Allatostatin-A-4: Expressed in antennal lobe (AL), corpora cardiaca (CC), corpora allata (CA) and gnathal ganglion (GNG) in all animals (at protein level). Allatostatin-A-5: Expressed in antennal lobe (AL), corpora cardiaca (CC), corpora allata (CA) and gnathal ganglion (GNG) in all animals (at protein level). Allatostatin-A-6: Expressed in antennal lobe (AL) and gnathal ganglion (GNG) (at protein level). Expression in AL detected in some animals, in GNG in few animals (at protein level). Not expressed in corpora cardiaca (CC) and corpora allata (CA) (at protein level). Allatostatin-A-7: Expressed in antennal lobe (AL), corpora cardiaca (CC), corpora allata (CA) and gnathal ganglion (GNG) (at protein level). Expression in AL detected in all animals, in GNG, CC and CA in most animals (at protein level). Allatostatin-A-8: Expressed in antennal lobe (AL), corpora cardiaca (CC), corpora allata (CA) and gnathal ganglion (GNG) (at protein level). Expression in AL detected in all animals, in GNG, CC and CA in most animals (at protein level). Allatostatin-A-9: Expressed in antennal lobe (AL), corpora cardiaca (CC), corpora allata (CA) and gnathal ganglion (GNG) (at protein level). Expression in AL detected in all animals, in GNG in most animals and in CC and CA in some animals (at protein level).

Its subcellular location is the secreted. Functionally, neuropeptide inhibitors of juvenile hormone synthesis and gut muscle contraction. This Agrotis ipsilon (Black cutworm moth) protein is Allatostatin-A.